The primary structure comprises 362 residues: Chorismate synthase (362 aa).

NADP(+) is bound by residues Arg-48 and Arg-54. Residues 125-127, 237-238, Gly-277, 292-296, and Arg-318 each bind FMN; these read RSS, NA, and KPTSS.

The protein belongs to the chorismate synthase family. As to quaternary structure, homotetramer. The cofactor is FMNH2.

It catalyses the reaction 5-O-(1-carboxyvinyl)-3-phosphoshikimate = chorismate + phosphate. It functions in the pathway metabolic intermediate biosynthesis; chorismate biosynthesis; chorismate from D-erythrose 4-phosphate and phosphoenolpyruvate: step 7/7. Catalyzes the anti-1,4-elimination of the C-3 phosphate and the C-6 proR hydrogen from 5-enolpyruvylshikimate-3-phosphate (EPSP) to yield chorismate, which is the branch point compound that serves as the starting substrate for the three terminal pathways of aromatic amino acid biosynthesis. This reaction introduces a second double bond into the aromatic ring system. This Idiomarina loihiensis (strain ATCC BAA-735 / DSM 15497 / L2-TR) protein is Chorismate synthase.